Reading from the N-terminus, the 811-residue chain is Ribonucleoside-diphosphate reductase large chain (811 aa).

In terms of domain architecture, ATP-cone spans 1–92 (MFVYKRDGRQ…VSNLHKQTEK (92 aa)). Residues 5–6 (KR), 11–17 (EKVAFDK), Thr53, and Asp57 contribute to the ATP site. GDP-binding residues include Ser202 and Ser217. A disulfide bridge connects residues Cys218 and Cys444. Residues 226 to 228 (DSI), Lys243, Arg256, and 263 to 264 (AG) contribute to the dTTP site. Asn427 lines the GDP pocket. Asn427 serves as the catalytic Proton acceptor. Cys429 acts as the Cysteine radical intermediate in catalysis. Residues Glu431 and 603-606 (TAST) each bind GDP. Glu431 acts as the Proton acceptor in catalysis.

The protein belongs to the ribonucleoside diphosphate reductase large chain family. Heterodimer of a large and a small subunit. Interacts with SPD1.

The catalysed reaction is a 2'-deoxyribonucleoside 5'-diphosphate + [thioredoxin]-disulfide + H2O = a ribonucleoside 5'-diphosphate + [thioredoxin]-dithiol. Under complex allosteric control mediated by deoxynucleoside triphosphates and ATP binding to separate specificity and activation sites on the large subunit. The type of nucleotide bound at the specificity site determines substrate preference. It seems probable that ATP makes the enzyme reduce CDP and UDP, dGTP favors ADP reduction and dTTP favors GDP reduction. Stimulated by ATP and inhibited by dATP binding to the activity site. Functionally, provides the precursors necessary for DNA synthesis. Catalyzes the biosynthesis of deoxyribonucleotides from the corresponding ribonucleotides. This chain is Ribonucleoside-diphosphate reductase large chain (cdc22), found in Schizosaccharomyces pombe (strain 972 / ATCC 24843) (Fission yeast).